The sequence spans 155 residues: Medium/long-chain acyl-CoA thioesterase YigI (155 aa).

This sequence belongs to the YigI thioesterase family.

The protein resides in the cytoplasm. It catalyses the reaction a fatty acyl-CoA + H2O = a fatty acid + CoA + H(+). The catalysed reaction is a medium-chain fatty acyl-CoA + H2O = a medium-chain fatty acid + CoA + H(+). The enzyme catalyses a long-chain fatty acyl-CoA + H2O = a long-chain fatty acid + CoA + H(+). Displays thioesterase activity against medium- to long-chain acyl-CoA substrates. Is involved in the thioesterase-dependent beta-oxidation pathway of (9Z,11E)-octadecadienoate (conjugated linoleic acid or CLA), along with TesB and FadM. The sequence is that of Medium/long-chain acyl-CoA thioesterase YigI (yigI) from Shigella flexneri.